The chain runs to 301 residues: uncharacterized protein (301 aa).

Topologically, residues 1–5 (MSYKK) are extracellular. Residues 6 to 26 (FVYFINLFFLLGATLLTFFLI) traverse the membrane as a helical segment. Residues 27–112 (LAGGRTTGVL…NRNAYYYLSR (86 aa)) lie on the Cytoplasmic side of the membrane. Residues 113 to 133 (VGWAMLLIGLFFLLITLVSVI) traverse the membrane as a helical segment. The Extracellular portion of the chain corresponds to 134–143 (ASLIRYNRRT). A helical transmembrane segment spans residues 144–164 (AALATAMSWITLFFITLSACL). At 165-191 (YTGCYAKAVKAFHHENRDARLGPKNFG) the chain is on the cytoplasmic side. Residues 192–212 (LIWTTVFLLIVNAICCTIMVA) traverse the membrane as a helical segment. Residues 213–301 (THKRNEYIYD…YTEQNVPVVS (89 aa)) are Extracellular-facing. Positions 254–301 (VQQSQSHQNHRFFKKLRTKKRTVTSAGDEPDRVQEERVYTEQNVPVVS) are disordered. Residues 261–275 (QNHRFFKKLRTKKRT) are compositionally biased toward basic residues. Residues 282 to 292 (EPDRVQEERVY) show a composition bias toward basic and acidic residues.

The protein belongs to the SUR7 family.

It is found in the cell membrane. Functionally, involved in sporulation and affects the sphingolipid composition of the plasma membrane. This is an uncharacterized protein from Saccharomyces cerevisiae (strain ATCC 204508 / S288c) (Baker's yeast).